Consider the following 133-residue polypeptide: Small ribosomal subunit protein uS8 (133 aa).

The interval 1-30 is disordered; the sequence is MANHDPISDMLTRIRNASEKRHETTKVPAS. Positions 16–25 are enriched in basic and acidic residues; sequence NASEKRHETT.

The protein belongs to the universal ribosomal protein uS8 family. In terms of assembly, part of the 30S ribosomal subunit. Contacts proteins S5 and S12.

One of the primary rRNA binding proteins, it binds directly to 16S rRNA central domain where it helps coordinate assembly of the platform of the 30S subunit. The protein is Small ribosomal subunit protein uS8 of Synechococcus sp. (strain CC9902).